We begin with the raw amino-acid sequence, 139 residues long: ATP synthase epsilon chain (139 aa).

This sequence belongs to the ATPase epsilon chain family. F-type ATPases have 2 components, CF(1) - the catalytic core - and CF(0) - the membrane proton channel. CF(1) has five subunits: alpha(3), beta(3), gamma(1), delta(1), epsilon(1). CF(0) has three main subunits: a, b and c.

It localises to the cell membrane. Functionally, produces ATP from ADP in the presence of a proton gradient across the membrane. The sequence is that of ATP synthase epsilon chain from Streptococcus pneumoniae serotype 2 (strain D39 / NCTC 7466).